We begin with the raw amino-acid sequence, 418 residues long: MSVAEQIRTIAAEARQASFAMAKLASAAKDQLLLDMALALINDAPHIIEENKKDLEAGQERGLSAAMLDRLMLNEARVKGMADAIREVAQLPDPVGEVTGMWKRPNDLMVGKMRIPLGVIGIIYESRPNVTSDAAALCLKSGNAVVLRGGSEAIHSNLAIATILKAQLAKHGIPAAALSLIPFVEREGVTEMLKQEEFIDVIIPRGGESLIRFVVENSKIPVIKHYKGVCHIFVDATADFEMAREIIVNAKTQRPGVCNALETLLIHKDIAETFVPFIYEALSSLKVELRGDKTFRQFAPKAAKATEEDWYAEYLELILAAAVVDGLDAAIDHINRYSSLHTESIITGDYANSQRFIREVNSGVVMVNASTRFSDGNQLGLGAEIGISTTKLHSFGPMGLTDLTTTKFIVYGSGQVRP.

Belongs to the gamma-glutamyl phosphate reductase family.

The protein localises to the cytoplasm. The enzyme catalyses L-glutamate 5-semialdehyde + phosphate + NADP(+) = L-glutamyl 5-phosphate + NADPH + H(+). The protein operates within amino-acid biosynthesis; L-proline biosynthesis; L-glutamate 5-semialdehyde from L-glutamate: step 2/2. Functionally, catalyzes the NADPH-dependent reduction of L-glutamate 5-phosphate into L-glutamate 5-semialdehyde and phosphate. The product spontaneously undergoes cyclization to form 1-pyrroline-5-carboxylate. The protein is Gamma-glutamyl phosphate reductase of Citrifermentans bemidjiense (strain ATCC BAA-1014 / DSM 16622 / JCM 12645 / Bem) (Geobacter bemidjiensis).